Consider the following 502-residue polypeptide: Glycerol kinase (502 aa).

T14 contacts ADP. The ATP site is built by T14, T15, and S16. T14 contacts sn-glycerol 3-phosphate. Position 18 (R18) interacts with ADP. Sn-glycerol 3-phosphate is bound by residues R84, E85, Y136, and D246. Glycerol contacts are provided by R84, E85, Y136, D246, and Q247. ADP contacts are provided by T268 and G311. The ATP site is built by T268, G311, Q315, and G412. 2 residues coordinate ADP: G412 and N416.

It belongs to the FGGY kinase family. In terms of assembly, homotetramer and homodimer (in equilibrium). Heterodimer with EIIA-Glc. Binds 1 zinc ion per glycerol kinase EIIA-Glc dimer. The zinc ion is important for dimerization.

The catalysed reaction is glycerol + ATP = sn-glycerol 3-phosphate + ADP + H(+). It functions in the pathway polyol metabolism; glycerol degradation via glycerol kinase pathway; sn-glycerol 3-phosphate from glycerol: step 1/1. Its activity is regulated as follows. Activity of this regulatory enzyme is affected by several metabolites. Allosterically and non-competitively inhibited by fructose 1,6-bisphosphate (FBP) and unphosphorylated phosphocarrier protein EIIA-Glc (III-Glc), an integral component of the bacterial phosphotransferase (PTS) system. In terms of biological role, key enzyme in the regulation of glycerol uptake and metabolism. Catalyzes the phosphorylation of glycerol to yield sn-glycerol 3-phosphate. This is Glycerol kinase from Escherichia fergusonii (strain ATCC 35469 / DSM 13698 / CCUG 18766 / IAM 14443 / JCM 21226 / LMG 7866 / NBRC 102419 / NCTC 12128 / CDC 0568-73).